A 454-amino-acid polypeptide reads, in one-letter code: tRNA modification GTPase MnmE (454 aa).

Arg23, Glu80, and Lys120 together coordinate (6S)-5-formyl-5,6,7,8-tetrahydrofolate. In terms of domain architecture, TrmE-type G spans 216–377; that stretch reads GMKVVIAGRP…LRNHLKQSMG (162 aa). Asn226 contributes to the K(+) binding site. Residues 226–231, 245–251, 270–273, 335–338, and 358–360 each bind GTP; these read NAGKSS, TDIAGTT, DTAG, NKAD, and SAR. Residue Ser230 participates in Mg(2+) binding. Residues Thr245, Ile247, and Thr250 each coordinate K(+). Residue Thr251 coordinates Mg(2+). Position 454 (Lys454) interacts with (6S)-5-formyl-5,6,7,8-tetrahydrofolate.

It belongs to the TRAFAC class TrmE-Era-EngA-EngB-Septin-like GTPase superfamily. TrmE GTPase family. As to quaternary structure, homodimer. Heterotetramer of two MnmE and two MnmG subunits. The cofactor is K(+).

Its subcellular location is the cytoplasm. Functionally, exhibits a very high intrinsic GTPase hydrolysis rate. Involved in the addition of a carboxymethylaminomethyl (cmnm) group at the wobble position (U34) of certain tRNAs, forming tRNA-cmnm(5)s(2)U34. The sequence is that of tRNA modification GTPase MnmE from Shigella flexneri serotype 5b (strain 8401).